Reading from the N-terminus, the 56-residue chain is Large ribosomal subunit protein bL32 (56 aa).

A disordered region spans residues 1 to 26 (MAVQQNKPTRSKRGMRRSHDSLTTAA).

This sequence belongs to the bacterial ribosomal protein bL32 family.

This is Large ribosomal subunit protein bL32 from Erwinia tasmaniensis (strain DSM 17950 / CFBP 7177 / CIP 109463 / NCPPB 4357 / Et1/99).